The primary structure comprises 635 residues: Threonine--tRNA ligase (635 aa).

The 61-residue stretch at 1 to 61 (MIVITLPDGS…EGDARLAIVT (61 aa)) folds into the TGS domain. The tract at residues 242 to 533 (DHRKLGRELD…LIEQHAGALP (292 aa)) is catalytic. Positions 333, 384, and 510 each coordinate Zn(2+).

Belongs to the class-II aminoacyl-tRNA synthetase family. Homodimer. Zn(2+) is required as a cofactor.

It is found in the cytoplasm. The enzyme catalyses tRNA(Thr) + L-threonine + ATP = L-threonyl-tRNA(Thr) + AMP + diphosphate + H(+). Catalyzes the attachment of threonine to tRNA(Thr) in a two-step reaction: L-threonine is first activated by ATP to form Thr-AMP and then transferred to the acceptor end of tRNA(Thr). Also edits incorrectly charged L-seryl-tRNA(Thr). The sequence is that of Threonine--tRNA ligase from Methylibium petroleiphilum (strain ATCC BAA-1232 / LMG 22953 / PM1).